The following is an 899-amino-acid chain: Valine--tRNA ligase (899 aa).

The 'HIGH' region signature appears at 58-68; sequence PNVTGVLHIGH. The 'KMSKS' region signature appears at 544 to 548; that stretch reads KMSKS. Lysine 547 is a binding site for ATP. Residues 836–898 adopt a coiled-coil conformation; the sequence is GTRLHNQRQK…NAELIALGLQ (63 aa).

Belongs to the class-I aminoacyl-tRNA synthetase family. ValS type 1 subfamily. Monomer.

It is found in the cytoplasm. The enzyme catalyses tRNA(Val) + L-valine + ATP = L-valyl-tRNA(Val) + AMP + diphosphate. In terms of biological role, catalyzes the attachment of valine to tRNA(Val). As ValRS can inadvertently accommodate and process structurally similar amino acids such as threonine, to avoid such errors, it has a 'posttransfer' editing activity that hydrolyzes mischarged Thr-tRNA(Val) in a tRNA-dependent manner. The sequence is that of Valine--tRNA ligase from Helicobacter hepaticus (strain ATCC 51449 / 3B1).